We begin with the raw amino-acid sequence, 215 residues long: Sodium channel regulatory subunit beta-2 (215 aa).

Positions 1–29 are cleaved as a signal peptide; it reads MHRDAWLPRPAFSLTGLSLFFSLVPPGRS. The Extracellular segment spans residues 30-157; it reads MEVTVPATLN…MEEPPERDST (128 aa). Positions 32–154 constitute an Ig-like C2-type domain; the sequence is VTVPATLNVL…QVLMEEPPER (123 aa). Asn42, Asn66, and Asn74 each carry an N-linked (GlcNAc...) asparagine glycan. 2 disulfide bridges follow: Cys50–Cys127 and Cys72–Cys75. A helical membrane pass occupies residues 158-179; it reads VAVIVGASVGGFLAVVILVLMV. Residues 180–215 are Cytoplasmic-facing; the sequence is VKCVRRKKEQKLSTDDLKTEEEGKTDGEGNPDDGAK. The interval 187–215 is disordered; it reads KEQKLSTDDLKTEEEGKTDGEGNPDDGAK. The span at 189–215 shows a compositional bias: basic and acidic residues; sequence QKLSTDDLKTEEEGKTDGEGNPDDGAK. Ser192 carries the post-translational modification Phosphoserine. Thr204 carries the phosphothreonine modification.

It belongs to the sodium channel auxiliary subunit SCN2B (TC 8.A.17) family. As to quaternary structure, a voltage-gated sodium (Nav) channel consists of an ion-conducting pore-forming alpha subunit functional on its own that is regulated by one or more beta subunits. The beta subunit SCN2B is disulfide-linked to the pore-forming alpha subunit. Interacts with SCN1A; regulatory subunit of SCN1A/Nav1.1. Interacts with SCN2A; regulatory subunit of SCN2A/Nav1.2. Interacts with SCN3A; regulatory subunit of SCN3A/Nav1.3. Interacts with SCN5A; regulatory subunit of SCN5A/Nav1.5. Interacts with SCN8A; regulatory subunit of SCN8A/Nav1.6. Interacts with SCN9A; regulatory subunit of SCN9A/Nav1.7. Interacts with SCN10A; regulatory subunit of SCN10A/Nav1.8. Interacts with TNR; may play a crucial role in clustering and regulation of activity of SCN2B-containing Nav channels at nodes of Ranvier.

It is found in the cell membrane. Its subcellular location is the cell projection. It localises to the axon. Regulatory subunit of multiple voltage-gated sodium (Nav) channels directly mediating the depolarization of excitable membranes. Navs, also called VGSCs (voltage-gated sodium channels) or VDSCs (voltage-dependent sodium channels), operate by switching between closed and open conformations depending on the voltage difference across the membrane. In the open conformation they allow Na(+) ions to selectively pass through the pore, along their electrochemical gradient. The influx of Na+ ions provokes membrane depolarization, initiating the propagation of electrical signals throughout cells and tissues. The accessory beta subunits participate in localization and functional modulation of the Nav channels. Modulates the activity of SCN1A/Nav1.1, SCN2A/Nav1.2, SCN2A/Nav1.3, SCN5A/Nav1.5, SCN8A/Nav1.6, SCN9A/Nav1.7 and SCN10A/Nav1.8. The protein is Sodium channel regulatory subunit beta-2 of Homo sapiens (Human).